The sequence spans 72 residues: LITAF domain-containing protein (72 aa).

Residues M1–R71 form the LITAF domain. C7 and C10 together coordinate Zn(2+). A membrane-binding amphipathic helix region spans residues P22–L45. Residues C59 and C62 each contribute to the Zn(2+) site.

It belongs to the CDIP1/LITAF family.

It is found in the membrane. The chain is LITAF domain-containing protein from Homo sapiens (Human).